The following is a 648-amino-acid chain: tRNA 5-methylaminomethyl-2-thiouridine biosynthesis bifunctional protein MnmC (648 aa).

The tract at residues 1-228 (MTDRLVPASL…VDDLLVGEYA (228 aa)) is tRNA (mnm(5)s(2)U34)-methyltransferase. The interval 252 to 648 (IGAGLAGCAV…LRARRVGRAG (397 aa)) is FAD-dependent cmnm(5)s(2)U34 oxidoreductase.

It in the N-terminal section; belongs to the methyltransferase superfamily. tRNA (mnm(5)s(2)U34)-methyltransferase family. This sequence in the C-terminal section; belongs to the DAO family. FAD serves as cofactor.

The protein resides in the cytoplasm. The catalysed reaction is 5-aminomethyl-2-thiouridine(34) in tRNA + S-adenosyl-L-methionine = 5-methylaminomethyl-2-thiouridine(34) in tRNA + S-adenosyl-L-homocysteine + H(+). Catalyzes the last two steps in the biosynthesis of 5-methylaminomethyl-2-thiouridine (mnm(5)s(2)U) at the wobble position (U34) in tRNA. Catalyzes the FAD-dependent demodification of cmnm(5)s(2)U34 to nm(5)s(2)U34, followed by the transfer of a methyl group from S-adenosyl-L-methionine to nm(5)s(2)U34, to form mnm(5)s(2)U34. The polypeptide is tRNA 5-methylaminomethyl-2-thiouridine biosynthesis bifunctional protein MnmC (Burkholderia lata (strain ATCC 17760 / DSM 23089 / LMG 22485 / NCIMB 9086 / R18194 / 383)).